The sequence spans 213 residues: Ribosomal RNA small subunit methyltransferase G (213 aa).

S-adenosyl-L-methionine-binding positions include G72, F77, 125-126 (IE), and R141.

Belongs to the methyltransferase superfamily. RNA methyltransferase RsmG family.

It localises to the cytoplasm. The enzyme catalyses guanosine(527) in 16S rRNA + S-adenosyl-L-methionine = N(7)-methylguanosine(527) in 16S rRNA + S-adenosyl-L-homocysteine. Functionally, specifically methylates the N7 position of guanine in position 527 of 16S rRNA. The polypeptide is Ribosomal RNA small subunit methyltransferase G (Rhizobium meliloti (strain 1021) (Ensifer meliloti)).